The primary structure comprises 397 residues: Elongation factor Tu (397 aa).

The tr-type G domain maps to 10–206 (KPHVNIGTIG…AVDQNIPEPQ (197 aa)). The interval 19-26 (GHIDHGKT) is G1. 19 to 26 (GHIDHGKT) contacts GTP. Residue threonine 26 participates in Mg(2+) binding. Residues 62 to 66 (GITIS) form a G2 region. A G3 region spans residues 83–86 (DCPG). GTP contacts are provided by residues 83-87 (DCPGH) and 138-141 (NKSD). The interval 138–141 (NKSD) is G4. A G5 region spans residues 176-178 (SAL).

Belongs to the TRAFAC class translation factor GTPase superfamily. Classic translation factor GTPase family. EF-Tu/EF-1A subfamily. In terms of assembly, monomer.

Its subcellular location is the cytoplasm. It catalyses the reaction GTP + H2O = GDP + phosphate + H(+). Functionally, GTP hydrolase that promotes the GTP-dependent binding of aminoacyl-tRNA to the A-site of ribosomes during protein biosynthesis. The sequence is that of Elongation factor Tu from Thermobifida fusca (strain YX).